The primary structure comprises 102 residues: MPVEQDGLTGGRGVPHPNSAAGQALSGKTGGSSVPHPNSAAGQALSGGMTGGSAVPHPNSAAGQELTNKNLEEKSVLEGGTQVKPWLKNQPDLANIREQNHQ.

A disordered region spans residues Met1–Gln102.

This is an uncharacterized protein from Caenorhabditis elegans.